A 445-amino-acid chain; its full sequence is DNA repair protein RadA (445 aa).

A C4-type zinc finger spans residues 10–27 (CSNCANISNKWSGQCFDC). 90–97 (GEPGIGKS) is a binding site for ATP. The short motif at 249 to 253 (KNRFG) is the RadA KNRFG motif element. The interval 348 to 445 (EIYLSIAGGL…HLQELKEIIK (98 aa)) is lon-protease-like.

The protein belongs to the RecA family. RadA subfamily.

DNA-dependent ATPase involved in processing of recombination intermediates, plays a role in repairing DNA breaks. Stimulates the branch migration of RecA-mediated strand transfer reactions, allowing the 3' invading strand to extend heteroduplex DNA faster. Binds ssDNA in the presence of ADP but not other nucleotides, has ATPase activity that is stimulated by ssDNA and various branched DNA structures, but inhibited by SSB. Does not have RecA's homology-searching function. The sequence is that of DNA repair protein RadA from Rickettsia prowazekii (strain Madrid E).